An 829-amino-acid chain; its full sequence is Potassium voltage-gated channel unc-103 (829 aa).

Positions 1–76 (MKTAVFGRDS…PRASHSSRRT (76 aa)) are disordered. Over 1–123 (MKTAVFGRDS…YSPFKAVWDW (123 aa)) the chain is Cytoplasmic. Over residues 46-66 (GVSGTGGGGSGGLQGAPGAGG) the composition is skewed to gly residues. The chain crosses the membrane as a helical span at residues 124–144 (IILLLVIYTAVFTPYVAAFLL). Over 145 to 158 (RELQDTAKKSRFTE) the chain is Extracellular. A helical transmembrane segment spans residues 159 to 179 (PLEIVDLIVDIMFIVDIIINF). Topologically, residues 180–203 (RTTYVNENDEACQVVSDPGKIATH) are cytoplasmic. Residues 204–224 (YFKGWFIIDMVAAVPFDLLLV) traverse the membrane as a helical segment. At 225 to 234 (STNSDETTTL) the chain is on the extracellular side. A helical; Voltage-sensor transmembrane segment spans residues 235–255 (IGLLKTARLLRLVRVARKLDR). The Cytoplasmic portion of the chain corresponds to 256 to 261 (YSEYGA). The helical transmembrane segment at 262-282 (AVLLLLMATFALIAHWLACIW) threads the bilayer. Residues 283 to 327 (YAIGSAELSHKEYTWLHQLSKQLAQPYTSTNGTIPTGGPTLKSRY) lie on the Extracellular side of the membrane. An N-linked (GlcNAc...) asparagine glycan is attached at N313. An intramembrane region (pore-forming) is located at residues 328–348 (VTSLYFTLSTITSIGFGNVSA). Over 349 to 354 (TTDSEK) the chain is Extracellular. Residues 355 to 375 (IFTIIMMILGSLMYASVFGNV) form a helical membrane-spanning segment. Residues 376 to 829 (SAIIQRLYSG…TPTQETDTIL (454 aa)) are Cytoplasmic-facing. 458–559 (AFAGSTPGCL…ILRDDLLDVL (102 aa)) provides a ligand contact to a nucleoside 3',5'-cyclic phosphate. Residues 601-674 (SMNKDRYTTP…PLLRRSTNHH (74 aa)) form a disordered region. A compositionally biased stretch (basic and acidic residues) spans 603-615 (NKDRYTTPPDGDH). Low complexity predominate over residues 640 to 650 (SAGSRSSSRCS).

It belongs to the potassium channel family. H (Eag) (TC 1.A.1.20) subfamily. Kv11.1/KCNH2 sub-subfamily. The potassium channel is composed of a homo- or heterotetrameric complex. Interacts with dnj-1; dnj-1 chaperone promotes tetramerization.

Its subcellular location is the cell membrane. Functionally, pore-forming (alpha) subunit of voltage-gated inwardly rectifying potassium channel. Channel properties are modulated by cAMP and subunit assembly. Regulates the movements of the male's copulatory spicules before and during male mating behavior. In Caenorhabditis elegans, this protein is Potassium voltage-gated channel unc-103.